The sequence spans 333 residues: Ig gamma-2B chain C region (333 aa).

Ig-like domains follow at residues 6–96, 124–223, and 232–328; these read PSVY…KKVE, PSVF…KTIS, and PQVY…KSIS. 3 disulfide bridges follow: Cys27-Cys80, Cys147-Cys207, and Cys253-Cys311.

The sequence is that of Ig gamma-2B chain C region (Igh-1a) from Rattus norvegicus (Rat).